We begin with the raw amino-acid sequence, 558 residues long: Dihydroxy-acid dehydratase (558 aa).

Mg(2+) is bound at residue Asp-78. Position 119 (Cys-119) interacts with [2Fe-2S] cluster. Residues Asp-120 and Lys-121 each contribute to the Mg(2+) site. Lys-121 bears the N6-carboxylysine mark. Cys-192 contacts [2Fe-2S] cluster. Glu-445 contributes to the Mg(2+) binding site. The active-site Proton acceptor is Ser-471.

Belongs to the IlvD/Edd family. As to quaternary structure, homodimer. Requires [2Fe-2S] cluster as cofactor. Mg(2+) is required as a cofactor.

It catalyses the reaction (2R)-2,3-dihydroxy-3-methylbutanoate = 3-methyl-2-oxobutanoate + H2O. It carries out the reaction (2R,3R)-2,3-dihydroxy-3-methylpentanoate = (S)-3-methyl-2-oxopentanoate + H2O. Its pathway is amino-acid biosynthesis; L-isoleucine biosynthesis; L-isoleucine from 2-oxobutanoate: step 3/4. It functions in the pathway amino-acid biosynthesis; L-valine biosynthesis; L-valine from pyruvate: step 3/4. Functionally, functions in the biosynthesis of branched-chain amino acids. Catalyzes the dehydration of (2R,3R)-2,3-dihydroxy-3-methylpentanoate (2,3-dihydroxy-3-methylvalerate) into 2-oxo-3-methylpentanoate (2-oxo-3-methylvalerate) and of (2R)-2,3-dihydroxy-3-methylbutanoate (2,3-dihydroxyisovalerate) into 2-oxo-3-methylbutanoate (2-oxoisovalerate), the penultimate precursor to L-isoleucine and L-valine, respectively. The polypeptide is Dihydroxy-acid dehydratase (Akkermansia muciniphila (strain ATCC BAA-835 / DSM 22959 / JCM 33894 / BCRC 81048 / CCUG 64013 / CIP 107961 / Muc)).